Here is a 689-residue protein sequence, read N- to C-terminus: Glycine--tRNA ligase beta subunit (689 aa).

It belongs to the class-II aminoacyl-tRNA synthetase family. Tetramer of two alpha and two beta subunits.

The protein localises to the cytoplasm. The catalysed reaction is tRNA(Gly) + glycine + ATP = glycyl-tRNA(Gly) + AMP + diphosphate. This Shewanella sp. (strain W3-18-1) protein is Glycine--tRNA ligase beta subunit.